The primary structure comprises 3291 residues: Protocadherin-16 (3291 aa).

A signal peptide spans 1 to 35; sequence MQEELSVALSCPGMKSLGTLLPLLVLLGTTVPGIR. The Extracellular segment spans residues 36–2933; that stretch reads GQAGSLDLQI…PDLNLLLVGA (2898 aa). 27 Cadherin domains span residues 37–137, 138–249, 250–356, 369–466, 476–572, 573–679, 680–784, 785–888, 889–994, 995–1105, 1100–1205, 1218–1317, 1326–1429, 1430–1539, 1539–1642, 1643–1744, 1745–1848, 1849–1953, 1976–2061, 2062–2164, 2165–2270, 2270–2369, 2370–2475, 2476–2595, 2596–2699, 2700–2806, and 2807–2926; these read QAGS…APAF, PQAR…APAF, NQSR…QPSM, VSEA…APAF, LPEV…EPQF, QRTF…PPQF, YPRE…PPIF, EQLQ…SPAF, PAPE…APRF, DSPT…EPTF, SEEP…SPTF, IQVP…SPDL, VPVV…APAF, ARDP…APVF, FASP…APAF, PQQE…SPTF, GNTH…APAF, PVPS…APAF, LATL…GPRF, PRAN…APRF, LQPH…RPTI, IPQP…VPIF, SQSL…APSF, TLPH…PPVF, TRAS…GPAF, PLSL…DPVF, and LAPS…APDL. N-linked (GlcNAc...) asparagine glycosylation is present at Asn396. A disordered region spans residues 951 to 971; it reads GPPGGPPHELEVEAQDGGSPP. A glycan (N-linked (GlcNAc...) asparagine) is linked at Asn1711. Asn2354 carries N-linked (GlcNAc...) asparagine glycosylation. Asn2562 is a glycosylation site (N-linked (GlcNAc...) asparagine). The helical transmembrane segment at 2934-2954 threads the bilayer; the sequence is VAASLGVVVVLALAALVLGLV. Topologically, residues 2955 to 3291 are cytoplasmic; the sequence is RARSRKAEAA…EPPDDTELRI (337 aa). Residues 2978 to 3033 form a disordered region; that stretch reads SLQKLGREPPSPPPSEHLYHQTLPSYGGPGAGGPYPRGGSLDPSHSSGRGSAEAAE. A compositionally biased stretch (gly residues) spans 3004-3013; the sequence is GGPGAGGPYP. Ser3048 is subject to Phosphoserine. Disordered regions lie at residues 3051–3080 and 3226–3291; these read SSLAARGPDSGIQQDADGLSDTSCEPPAPD and ASHR…ELRI. Residues 3237–3259 are compositionally biased toward low complexity; it reads SLSSAAMSPSFSPSLSPLAARSP. Residues 3270–3279 are compositionally biased toward polar residues; the sequence is PSASALSTES.

Heterophilic interaction with FAT4; this interaction affects their respective protein levels.

It localises to the cell membrane. Calcium-dependent cell-adhesion protein. Mediates functions in neuroprogenitor cell proliferation and differentiation. In Rattus norvegicus (Rat), this protein is Protocadherin-16 (Dchs1).